A 382-amino-acid chain; its full sequence is Probable purine permease 4 (382 aa).

10 helical membrane passes run 25–45, 62–82, 98–118, 121–141, 150–170, 185–205, 224–244, 260–280, 291–311, and 315–335; these read LTLLIVTYFFLFFGSIASSLL, WVQSAGFPLLLILIYFPHYVL, LIFSVLIGLVLGFNNFLFSWG, YLPVSTSSLLLSTQLVFTLIL, ITFSNLNCVVLLTLSSVLLAL, YFIGYVSTIGAGLLFALYLPV, LVMEFAATVFATIGMACEGGF, TFYWTFAILANVVTWQLSFAA, ITGGICMTALLAMNVIGGVVA, and VFGGVKIVSTVLCIWGFSSYT. The region spanning 66–170 is the EamA domain; that stretch reads AGFPLLLILI…LTLSSVLLAL (105 aa). The interval 345–364 is disordered; it reads EEKEKGEYSGVKTTEDSGEM.

The protein belongs to the purine permeases (TC 2.A.7.14) family.

It localises to the membrane. The chain is Probable purine permease 4 (PUP4) from Arabidopsis thaliana (Mouse-ear cress).